We begin with the raw amino-acid sequence, 694 residues long: Cyclic nucleotide-gated ion channel 4 (694 aa).

Residues 1–15 (MATEQEFTRASRFSR) are compositionally biased toward basic and acidic residues. The tract at residues 1–64 (MATEQEFTRA…RIGLTCGGRR (64 aa)) is disordered. Topologically, residues 1–92 (MATEQEFTRA…RSKWVREWNK (92 aa)) are cytoplasmic. Acidic residues predominate over residues 24 to 53 (SEEDNTEEEDEEEEEMEEIEEEEEEEEEED). The helical transmembrane segment at 93–113 (VFLLVCATGLFVDPLFLYTLS) threads the bilayer. At 114-126 (VSDTCMCLLVDGW) the chain is on the extracellular side. The helical transmembrane segment at 127–147 (LALTVTALRSMTDLLHLWNIW) threads the bilayer. Residues 148-187 (IQFKIARRWPYPGGDSDGDTNKGGGTRGSTRVAPPYVKKN) lie on the Cytoplasmic side of the membrane. The helical transmembrane segment at 188-208 (GFFFDLFVILPLPQVVLWVVI) threads the bilayer. The Extracellular portion of the chain corresponds to 209–216 (PSLLKRGS). Residues 217 to 237 (VTLVVSVLLVTFLFQYLPKIY) traverse the membrane as a helical segment. The Cytoplasmic segment spans residues 238 to 251 (HSIRHLRRNATLSG). Residues 252 to 272 (YIFGTVWWGIALNMIAYFVAA) form a helical membrane-spanning segment. Residues 273–392 (HAAGACWYLL…LESTTEWSEV (120 aa)) lie on the Extracellular side of the membrane. A helical membrane pass occupies residues 393 to 413 (VFNIIVLTSGLLLVTMLIGNI). Over 414–694 (KVFLHATTSK…KPNPDDFDDY (281 aa)) the chain is Cytoplasmic. A nucleoside 3',5'-cyclic phosphate is bound by residues 496-626 (LFQH…ARYY) and aspartate 565. The segment at 610–626 (FRYTFVNEKVKRSARYY) is calmodulin-binding. The 30-residue stretch at 631-660 (RTWAAVAVQLAWRRYKHRLTLTSLSFIRPR) folds into the IQ domain.

It belongs to the cyclic nucleotide-gated cation channel (TC 1.A.1.5) family. As to quaternary structure, homotetramer or heterotetramer.

It localises to the cell membrane. Functionally, acts as a cyclic nucleotide-gated ion channel. Permeable to potassium and sodium in a cyclic nucleotide-dependent fashion (cAMP or cGMP). Might constitute a common downstream component of the signaling pathways leading to hypersensitive response (HR). This Arabidopsis thaliana (Mouse-ear cress) protein is Cyclic nucleotide-gated ion channel 4 (CNGC4).